Here is a 190-residue protein sequence, read N- to C-terminus: 2-phospho-L-lactate guanylyltransferase (190 aa).

Belongs to the CofC family. In terms of assembly, homodimer.

It carries out the reaction (2S)-2-phospholactate + GTP + H(+) = (2S)-lactyl-2-diphospho-5'-guanosine + diphosphate. Its pathway is cofactor biosynthesis; coenzyme F420 biosynthesis. In terms of biological role, guanylyltransferase that catalyzes the activation of (2S)-2-phospholactate (2-PL) as (2S)-lactyl-2-diphospho-5'-guanosine, via the condensation of 2-PL with GTP. It is involved in the biosynthesis of coenzyme F420, a hydride carrier cofactor. This is 2-phospho-L-lactate guanylyltransferase from Methanopyrus kandleri (strain AV19 / DSM 6324 / JCM 9639 / NBRC 100938).